The sequence spans 276 residues: Phosphatidylglycerol--prolipoprotein diacylglyceryl transferase (276 aa).

Helical transmembrane passes span 17–37 (FGPF…VLGW), 59–79 (FLSW…ILFY), 94–114 (VWDG…AILI), 132–152 (VPVP…GELW), 177–197 (PSEL…LLIA), 208–225 (GYLG…RTTA), and 235–255 (LGYL…MIVI). Arg142 is an a 1,2-diacyl-sn-glycero-3-phospho-(1'-sn-glycerol) binding site.

This sequence belongs to the Lgt family.

Its subcellular location is the cell inner membrane. It carries out the reaction L-cysteinyl-[prolipoprotein] + a 1,2-diacyl-sn-glycero-3-phospho-(1'-sn-glycerol) = an S-1,2-diacyl-sn-glyceryl-L-cysteinyl-[prolipoprotein] + sn-glycerol 1-phosphate + H(+). The protein operates within protein modification; lipoprotein biosynthesis (diacylglyceryl transfer). Functionally, catalyzes the transfer of the diacylglyceryl group from phosphatidylglycerol to the sulfhydryl group of the N-terminal cysteine of a prolipoprotein, the first step in the formation of mature lipoproteins. This Acidiphilium cryptum (strain JF-5) protein is Phosphatidylglycerol--prolipoprotein diacylglyceryl transferase.